The sequence spans 37 residues: Cytochrome b6-f complex subunit 5 (37 aa).

The chain crosses the membrane as a helical span at residues 5 to 25; sequence LLSGIVLGLIPITLAGLFVTA.

Belongs to the PetG family. The 4 large subunits of the cytochrome b6-f complex are cytochrome b6, subunit IV (17 kDa polypeptide, PetD), cytochrome f and the Rieske protein, while the 4 small subunits are PetG, PetL, PetM and PetN. The complex functions as a dimer.

It localises to the plastid. It is found in the chloroplast thylakoid membrane. Component of the cytochrome b6-f complex, which mediates electron transfer between photosystem II (PSII) and photosystem I (PSI), cyclic electron flow around PSI, and state transitions. PetG is required for either the stability or assembly of the cytochrome b6-f complex. The chain is Cytochrome b6-f complex subunit 5 from Angiopteris evecta (Mule's foot fern).